A 693-amino-acid chain; its full sequence is Phosphoribosylformylglycinamidine synthase subunit PurL (693 aa).

Histidine 34 is a catalytic residue. ATP-binding residues include tyrosine 37 and lysine 76. Glutamate 78 is a binding site for Mg(2+). Substrate-binding positions include 79–82 and arginine 101; that span reads SHNH. Histidine 80 acts as the Proton acceptor in catalysis. Aspartate 102 serves as a coordination point for Mg(2+). Glutamine 222 is a binding site for substrate. Aspartate 248 contributes to the Mg(2+) binding site. 292-294 contacts substrate; it reads ETQ. Aspartate 470 and glycine 507 together coordinate ATP. Substrate is bound at residue serine 510.

It belongs to the FGAMS family. Monomer. Part of the FGAM synthase complex composed of 1 PurL, 1 PurQ and 2 PurS subunits.

Its subcellular location is the cytoplasm. It carries out the reaction N(2)-formyl-N(1)-(5-phospho-beta-D-ribosyl)glycinamide + L-glutamine + ATP + H2O = 2-formamido-N(1)-(5-O-phospho-beta-D-ribosyl)acetamidine + L-glutamate + ADP + phosphate + H(+). Its pathway is purine metabolism; IMP biosynthesis via de novo pathway; 5-amino-1-(5-phospho-D-ribosyl)imidazole from N(2)-formyl-N(1)-(5-phospho-D-ribosyl)glycinamide: step 1/2. In terms of biological role, part of the phosphoribosylformylglycinamidine synthase complex involved in the purines biosynthetic pathway. Catalyzes the ATP-dependent conversion of formylglycinamide ribonucleotide (FGAR) and glutamine to yield formylglycinamidine ribonucleotide (FGAM) and glutamate. The FGAM synthase complex is composed of three subunits. PurQ produces an ammonia molecule by converting glutamine to glutamate. PurL transfers the ammonia molecule to FGAR to form FGAM in an ATP-dependent manner. PurS interacts with PurQ and PurL and is thought to assist in the transfer of the ammonia molecule from PurQ to PurL. The protein is Phosphoribosylformylglycinamidine synthase subunit PurL of Pyrobaculum islandicum (strain DSM 4184 / JCM 9189 / GEO3).